A 589-amino-acid polypeptide reads, in one-letter code: Aspartate--tRNA ligase (589 aa).

Glu-171 serves as a coordination point for L-aspartate. The tract at residues Gln-195–Lys-198 is aspartate. Arg-217 is a binding site for L-aspartate. ATP-binding positions include Arg-217–Glu-219 and Gln-226. Residue His-448 participates in L-aspartate binding. Glu-482 is a binding site for ATP. Arg-489 provides a ligand contact to L-aspartate. Gly-534–Arg-537 is an ATP binding site.

The protein belongs to the class-II aminoacyl-tRNA synthetase family. Type 1 subfamily. As to quaternary structure, homodimer.

It localises to the cytoplasm. The catalysed reaction is tRNA(Asp) + L-aspartate + ATP = L-aspartyl-tRNA(Asp) + AMP + diphosphate. Functionally, catalyzes the attachment of L-aspartate to tRNA(Asp) in a two-step reaction: L-aspartate is first activated by ATP to form Asp-AMP and then transferred to the acceptor end of tRNA(Asp). The chain is Aspartate--tRNA ligase from Idiomarina loihiensis (strain ATCC BAA-735 / DSM 15497 / L2-TR).